The primary structure comprises 2201 residues: Tenascin (2201 aa).

An N-terminal signal peptide occupies residues 1–22 (MGAMTQLLAGVFLAFLALATEG). The N-linked (GlcNAc...) asparagine glycan is linked to N38. S65 and S70 each carry phosphoserine. Position 72 is a phosphoserine; by FAM20C (S72). O-linked (Xyl...) (chondroitin sulfate) serine glycosylation occurs at S72. Residues 118–145 (DVKELLSRLEELENLVSSLREQCTAGAG) adopt a coiled-coil conformation. N-linked (GlcNAc...) asparagine glycosylation is found at N166 and N184. Residues 174-186 (CVCEPGWKGPNCS) form the EGF-like 1; incomplete domain. EGF-like domains lie at 186–217 (SEPECPGNCHLRGRCIDGQCICDDGFTGEDCS), 217–248 (SQLACPSDCNDQGKCVNGVCICFEGYAGADCS), 248–280 (SREICPVPCSEEHGTCVDGLCVCHDGFAGDDCN), 280–311 (NKPLCLNNCYNRGRCVENECVCDEGFTGEDCS), 311–342 (SELICPNDCFDRGRCINGTCYCEEGFTGEDCG), 342–373 (GKPTCPHACHTQGRCEEGQCVCDEGFAGVDCS), 373–404 (SEKRCPADCHNRGRCVDGRCECDDGFTGADCG), 404–435 (GELKCPNGCSGHGRCVNGQCVCDEGYTGEDCS), 435–466 (SQLRCPNDCHSRGRCVEGKCVCEQGFKGYDCS), 466–497 (SDMSCPNDCHQHGRCVNGMCVCDDGYTGEDCR), 497–528 (RDRQCPRDCSNRGLCVDGQCVCEDGFTGPDCA), 528–559 (AELSCPNDCHGQGRCVNGQCVCHEGFMGKDCK), 559–590 (KEQRCPSDCHGQGRCVDGQCICHEGFTGLDCG), and 590–621 (GQHSCPSDCNNLGQCVSGRCICNEGYSGEDCS). Intrachain disulfides connect C190–C200, C194–C205, C207–C216, C221–C231, C225–C236, C238–C247, C252–C263, C256–C268, C270–C279, C284–C294, C288–C299, C301–C310, C315–C325, C319–C330, C332–C341, C346–C356, C350–C361, C363–C372, C377–C387, C381–C392, C394–C403, C408–C418, C412–C423, C425–C434, C439–C449, C443–C454, C456–C465, C470–C480, C474–C485, C487–C496, C501–C511, C505–C516, C518–C527, C532–C542, C536–C547, C549–C558, C563–C573, C567–C578, C580–C589, C594–C604, C598–C609, and C611–C620. N327 carries N-linked (GlcNAc...) asparagine glycosylation. Fibronectin type-III domains lie at 625–715 (PPKD…LPAP), 716–804 (EGLK…TRLD), 805–894 (APSQ…TGLD), 895–990 (APRN…TPKD), 991–1075 (LQVS…EQAP), 1076–1165 (ELEN…TGET), 1167–1256 (NLGE…TEEV), 1258–1350 (DMGN…LPQL), 1351–1439 (GDLA…AKEP), 1440–1531 (EIGN…ALPL), 1533–1621 (ENLT…EAEP), 1622–1711 (EVDN…TAMG), 1712–1801 (SPKE…ALDG), 1802–1888 (PSGL…TDLD), and 1889–1977 (SPRD…IGLL). N-linked (GlcNAc...) asparagine glycosylation occurs at N788. Phosphothreonine is present on T905. Residues N1018, N1034, N1079, N1093, N1119, N1184, N1210, N1261, N1275, N1301, N1366, N1392, N1445, N1455, N1485, and N1534 are each glycosylated (N-linked (GlcNAc...) asparagine). N-linked (GlcNAc...) asparagine glycosylation is present at N1809. In terms of domain architecture, Fibrinogen C-terminal spans 1975-2190 (GLLYPFPKDC…FAEMKLRPSN (216 aa)). An N-linked (GlcNAc...) asparagine glycan is attached at N2162.

It belongs to the tenascin family. As to quaternary structure, homohexamer; disulfide-linked. A homotrimer may be formed in the triple coiled-coil region and may be stabilized by disulfide rings at both ends. Two of such half-hexabrachions may be disulfide linked within the central globule. Interacts with CSPG4. Interacts (via the 3rd fibronectin type-III domain) with integrin ITGA9:ITGB1. Detected in fibroblasts (at protein level).

It is found in the secreted. It localises to the extracellular space. The protein resides in the extracellular matrix. Its function is as follows. Extracellular matrix protein implicated in guidance of migrating neurons as well as axons during development, synaptic plasticity as well as neuronal regeneration. Promotes neurite outgrowth from cortical neurons grown on a monolayer of astrocytes. Ligand for integrins alpha-8/beta-1, alpha-9/beta-1, alpha-V/beta-3 and alpha-V/beta-6. In tumors, stimulates angiogenesis by elongation, migration and sprouting of endothelial cells. The chain is Tenascin (TNC) from Homo sapiens (Human).